The chain runs to 116 residues: Iron-sulfur cluster insertion protein ErpA (116 aa).

Residues cysteine 44, cysteine 108, and cysteine 110 each coordinate iron-sulfur cluster.

It belongs to the HesB/IscA family. As to quaternary structure, homodimer. Iron-sulfur cluster serves as cofactor.

Required for insertion of 4Fe-4S clusters for at least IspG. In Pseudomonas syringae pv. syringae (strain B728a), this protein is Iron-sulfur cluster insertion protein ErpA.